Here is a 359-residue protein sequence, read N- to C-terminus: Nicotinate-nucleotide--dimethylbenzimidazole phosphoribosyltransferase (359 aa).

Glu-318 functions as the Proton acceptor in the catalytic mechanism.

Belongs to the CobT family. In terms of assembly, homodimer.

The enzyme catalyses 5,6-dimethylbenzimidazole + nicotinate beta-D-ribonucleotide = alpha-ribazole 5'-phosphate + nicotinate + H(+). Its pathway is nucleoside biosynthesis; alpha-ribazole biosynthesis; alpha-ribazole from 5,6-dimethylbenzimidazole: step 1/2. Functionally, catalyzes the synthesis of alpha-ribazole-5'-phosphate from nicotinate mononucleotide (NAMN) and 5,6-dimethylbenzimidazole (DMB). The chain is Nicotinate-nucleotide--dimethylbenzimidazole phosphoribosyltransferase from Escherichia coli O127:H6 (strain E2348/69 / EPEC).